The chain runs to 198 residues: Molybdenum cofactor guanylyltransferase (198 aa).

Residues 14-16 (LAG), lysine 27, aspartate 73, and aspartate 103 each bind GTP. Residue aspartate 103 coordinates Mg(2+).

The protein belongs to the MobA family. In terms of assembly, monomer. It depends on Mg(2+) as a cofactor.

The protein resides in the cytoplasm. The enzyme catalyses Mo-molybdopterin + GTP + H(+) = Mo-molybdopterin guanine dinucleotide + diphosphate. Functionally, transfers a GMP moiety from GTP to Mo-molybdopterin (Mo-MPT) cofactor (Moco or molybdenum cofactor) to form Mo-molybdopterin guanine dinucleotide (Mo-MGD) cofactor. The protein is Molybdenum cofactor guanylyltransferase of Pseudomonas paraeruginosa (strain DSM 24068 / PA7) (Pseudomonas aeruginosa (strain PA7)).